The sequence spans 282 residues: Bifunctional protein FolD (282 aa).

Residues 162–164 (GRS), serine 187, and valine 228 each bind NADP(+).

It belongs to the tetrahydrofolate dehydrogenase/cyclohydrolase family. As to quaternary structure, homodimer.

It catalyses the reaction (6R)-5,10-methylene-5,6,7,8-tetrahydrofolate + NADP(+) = (6R)-5,10-methenyltetrahydrofolate + NADPH. It carries out the reaction (6R)-5,10-methenyltetrahydrofolate + H2O = (6R)-10-formyltetrahydrofolate + H(+). It participates in one-carbon metabolism; tetrahydrofolate interconversion. In terms of biological role, catalyzes the oxidation of 5,10-methylenetetrahydrofolate to 5,10-methenyltetrahydrofolate and then the hydrolysis of 5,10-methenyltetrahydrofolate to 10-formyltetrahydrofolate. The protein is Bifunctional protein FolD of Thermus thermophilus (strain ATCC 27634 / DSM 579 / HB8).